The sequence spans 99 residues: Large ribosomal subunit protein bL28 (99 aa).

The protein belongs to the bacterial ribosomal protein bL28 family.

This chain is Large ribosomal subunit protein bL28, found in Rhizobium leguminosarum bv. trifolii (strain WSM2304).